The sequence spans 337 residues: Quinolinate synthase (337 aa).

The iminosuccinate site is built by His40 and Ser57. Cys102 provides a ligand contact to [4Fe-4S] cluster. Iminosuccinate is bound by residues 128-130 (YVN) and Ser145. [4Fe-4S] cluster is bound at residue Cys189. Residues 215–217 (HPE) and Thr243 each bind iminosuccinate. Cys288 is a [4Fe-4S] cluster binding site.

This sequence belongs to the quinolinate synthase family. Type 2 subfamily. Requires [4Fe-4S] cluster as cofactor.

The protein localises to the cytoplasm. It catalyses the reaction iminosuccinate + dihydroxyacetone phosphate = quinolinate + phosphate + 2 H2O + H(+). It participates in cofactor biosynthesis; NAD(+) biosynthesis; quinolinate from iminoaspartate: step 1/1. Functionally, catalyzes the condensation of iminoaspartate with dihydroxyacetone phosphate to form quinolinate. This is Quinolinate synthase from Mycobacterium sp. (strain JLS).